The chain runs to 312 residues: Carbonic anhydrase 4 (312 aa).

The N-terminal stretch at 1–18 is a signal peptide; it reads MRMLLALLALSAARPSAS. Residues 21 to 285 enclose the Alpha-carbonic anhydrase domain; that stretch reads SHWCYEVQAE…LGQRTVIKSG (265 aa). 2 disulfides stabilise this stretch: Cys24-Cys36 and Cys46-Cys229. Residue His88 is the Proton donor/acceptor of the active site. Residues His115, His117, and His140 each contribute to the Zn(2+) site. 225–226 is a binding site for substrate; that stretch reads TT. Ser284 carries the GPI-anchor amidated serine lipid modification. Positions 285-312 are cleaved as a propeptide — removed in mature form; the sequence is GAPGRPLPWALPALLGPMLACLLAGFLR.

Belongs to the alpha-carbonic anhydrase family. In terms of assembly, interacts with SLC4A4. It depends on Zn(2+) as a cofactor. Expressed in the endothelium of the choriocapillaris in eyes (at protein level). Not expressed in the retinal epithelium at detectable levels.

It localises to the cell membrane. The enzyme catalyses hydrogencarbonate + H(+) = CO2 + H2O. Its activity is regulated as follows. Activated by histamine, L-adrenaline, D-phenylalanine, L- and D-histidine. Inhibited by coumarins, saccharin, sulfonamide derivatives such as acetazolamide and Foscarnet (phosphonoformate trisodium salt). In terms of biological role, catalyzes the reversible hydration of carbon dioxide into bicarbonate and protons and thus is essential to maintaining intracellular and extracellular pH. May stimulate the sodium/bicarbonate transporter activity of SLC4A4 that acts in pH homeostasis. It is essential for acid overload removal from the retina and retina epithelium, and acid release in the choriocapillaris in the choroid. This chain is Carbonic anhydrase 4, found in Homo sapiens (Human).